A 238-amino-acid chain; its full sequence is Ditrans,polycis-undecaprenyl-diphosphate synthase ((2E,6E)-farnesyl-diphosphate specific) (238 aa).

D14 is a catalytic residue. D14 is a binding site for Mg(2+). Residues 15–18, W19, R27, H31, and 59–61 contribute to the substrate site; these read GNGR and SSE. The Proton acceptor role is filled by N62. Residues W63, R65, R182, and 188-190 contribute to the substrate site; that span reads RIS. E201 serves as a coordination point for Mg(2+).

It belongs to the UPP synthase family. In terms of assembly, homodimer. Requires Mg(2+) as cofactor.

It carries out the reaction 8 isopentenyl diphosphate + (2E,6E)-farnesyl diphosphate = di-trans,octa-cis-undecaprenyl diphosphate + 8 diphosphate. Catalyzes the sequential condensation of isopentenyl diphosphate (IPP) with (2E,6E)-farnesyl diphosphate (E,E-FPP) to yield (2Z,6Z,10Z,14Z,18Z,22Z,26Z,30Z,34E,38E)-undecaprenyl diphosphate (di-trans,octa-cis-UPP). UPP is the precursor of glycosyl carrier lipid in the biosynthesis of bacterial cell wall polysaccharide components such as peptidoglycan and lipopolysaccharide. This is Ditrans,polycis-undecaprenyl-diphosphate synthase ((2E,6E)-farnesyl-diphosphate specific) from Legionella pneumophila subsp. pneumophila (strain Philadelphia 1 / ATCC 33152 / DSM 7513).